The primary structure comprises 610 residues: Threonine--tRNA ligase (610 aa).

The disordered stretch occupies residues 1–29 (MANHDQQTVSSAAATTSASPSPVVLPKTS). Low complexity predominate over residues 8–24 (TVSSAAATTSASPSPVV). The interval 209–502 (DHRRIGKDLD…MTENYAGDYP (294 aa)) is catalytic. Positions 302, 353, and 479 each coordinate Zn(2+).

The protein belongs to the class-II aminoacyl-tRNA synthetase family. In terms of assembly, homodimer. The cofactor is Zn(2+).

The protein localises to the cytoplasm. The enzyme catalyses tRNA(Thr) + L-threonine + ATP = L-threonyl-tRNA(Thr) + AMP + diphosphate + H(+). Catalyzes the attachment of threonine to tRNA(Thr) in a two-step reaction: L-threonine is first activated by ATP to form Thr-AMP and then transferred to the acceptor end of tRNA(Thr). Also edits incorrectly charged L-seryl-tRNA(Thr). The polypeptide is Threonine--tRNA ligase (Synechococcus sp. (strain WH7803)).